The following is a 178-amino-acid chain: Large ribosomal subunit protein uL6 (178 aa).

It belongs to the universal ribosomal protein uL6 family. In terms of assembly, part of the 50S ribosomal subunit.

In terms of biological role, this protein binds to the 23S rRNA, and is important in its secondary structure. It is located near the subunit interface in the base of the L7/L12 stalk, and near the tRNA binding site of the peptidyltransferase center. The sequence is that of Large ribosomal subunit protein uL6 from Streptococcus pneumoniae serotype 4 (strain ATCC BAA-334 / TIGR4).